The primary structure comprises 1018 residues: Contactin-1 (1018 aa).

The first 20 residues, 1-20 (MKMWLLFSLLVIISFKTCLS), serve as a signal peptide directing secretion. Ig-like C2-type domains are found at residues 41-131 (PIFE…ATLS), 137-223 (PFPP…KSVF), 241-326 (PADI…ARIY), 331-407 (PEWV…AELK), 413-500 (PTFE…GTLV), and 504-601 (PTRI…LVVR). Disulfide bonds link cysteine 65–cysteine 114 and cysteine 158–cysteine 211. N-linked (GlcNAc...) asparagine glycans are attached at residues asparagine 208 and asparagine 258. A disulfide bridge links cysteine 263 with cysteine 310. Asparagine 338 is a glycosylation site (N-linked (GlcNAc...) asparagine). 2 disulfide bridges follow: cysteine 352/cysteine 391 and cysteine 436/cysteine 484. Residues asparagine 457, asparagine 473, asparagine 494, and asparagine 521 are each glycosylated (N-linked (GlcNAc...) asparagine). Residues cysteine 526 and cysteine 583 are joined by a disulfide bond. N-linked (GlcNAc...) asparagine glycosylation is present at asparagine 591. Fibronectin type-III domains lie at 606–704 (PPGG…TDGA), 709–806 (APSD…SAQD), 811–906 (APTA…APPS), and 907–1000 (QPPR…ILSP). Disordered stretches follow at residues 698 to 718 (KIKTDGAAPNVAPSDVGGGGG) and 891 to 910 (PPSDMTETFTKKAPPSQPPR). Serine 999 carries the GPI-anchor amidated serine lipid modification. Positions 1000–1018 (PCLLGFLLPALGILVYLEF) are cleaved as a propeptide — removed in mature form.

This sequence belongs to the immunoglobulin superfamily. Contactin family. In terms of assembly, monomer. Interacts with CNTNAP1 in cis form. Binds to the carbonic-anhydrase like domain of PTPRZ1. Interacts with NOTCH1 and TNR. Detected in a complex with NRCAM and PTPRB. Interacts with TASOR.

The protein localises to the cell membrane. Contactins mediate cell surface interactions during nervous system development. Involved in the formation of paranodal axo-glial junctions in myelinated peripheral nerves and in the signaling between axons and myelinating glial cells via its association with CNTNAP1. Participates in oligodendrocytes generation by acting as a ligand of NOTCH1. Its association with NOTCH1 promotes NOTCH1 activation through the released notch intracellular domain (NICD) and subsequent translocation to the nucleus. Interaction with TNR induces a repulsion of neurons and an inhibition of neurite outgrowth. This chain is Contactin-1 (CNTN1), found in Bos taurus (Bovine).